Reading from the N-terminus, the 223-residue chain is 2-C-methyl-D-erythritol 4-phosphate cytidylyltransferase (223 aa).

This sequence belongs to the IspD/TarI cytidylyltransferase family. IspD subfamily.

The enzyme catalyses 2-C-methyl-D-erythritol 4-phosphate + CTP + H(+) = 4-CDP-2-C-methyl-D-erythritol + diphosphate. Its pathway is isoprenoid biosynthesis; isopentenyl diphosphate biosynthesis via DXP pathway; isopentenyl diphosphate from 1-deoxy-D-xylulose 5-phosphate: step 2/6. Functionally, catalyzes the formation of 4-diphosphocytidyl-2-C-methyl-D-erythritol from CTP and 2-C-methyl-D-erythritol 4-phosphate (MEP). This Prochlorococcus marinus subsp. pastoris (strain CCMP1986 / NIES-2087 / MED4) protein is 2-C-methyl-D-erythritol 4-phosphate cytidylyltransferase.